The sequence spans 569 residues: Melanophilin (569 aa).

Positions K4–H124 constitute a RabBD domain. Residues H58–V112 form an FYVE-type zinc finger. The segment at G143–E430 is disordered. 2 stretches are compositionally biased toward basic and acidic residues: residues E352 to T362 and E379 to I390. A compositionally biased stretch (polar residues) spans S404–R415. Positions L431 to A465 form a coiled coil. The tract at residues G490–P569 is disordered. Residues S526–D535 are compositionally biased toward basic and acidic residues.

Binds RAB27A that has been activated by GTP-binding via its N-terminus. Binds MYO5A via its C-terminal coiled coil domain.

The protein localises to the melanosome. Rab effector protein involved in melanosome transport. Serves as link between melanosome-bound RAB27A and the motor protein MYO5A. This is Melanophilin (MLPH) from Felis catus (Cat).